A 516-amino-acid chain; its full sequence is Maturase K (516 aa).

The protein belongs to the intron maturase 2 family. MatK subfamily.

It is found in the plastid. The protein localises to the chloroplast. In terms of biological role, usually encoded in the trnK tRNA gene intron. Probably assists in splicing its own and other chloroplast group II introns. The protein is Maturase K of Chara connivens (Convergent stonewort).